We begin with the raw amino-acid sequence, 227 residues long: Cytochrome c oxidase subunit 2 (227 aa).

The Mitochondrial intermembrane portion of the chain corresponds to 1–14 (MAHPVQLGFQDAAS). The helical transmembrane segment at 15–45 (PIMEELLYFHDHTLMIMFLISSLVLYIISLM) threads the bilayer. The Mitochondrial matrix portion of the chain corresponds to 46–59 (LTTKLTHTSTMDAQ). A helical transmembrane segment spans residues 60–87 (EVETVWTILPAAILILIALPSLRILYMM). Residues 88-227 (DEITSPSLTL…HFEEWLLFTL (140 aa)) lie on the Mitochondrial intermembrane side of the membrane. H161, C196, E198, C200, H204, and M207 together coordinate Cu cation. Residue E198 coordinates Mg(2+).

Belongs to the cytochrome c oxidase subunit 2 family. As to quaternary structure, component of the cytochrome c oxidase (complex IV, CIV), a multisubunit enzyme composed of 14 subunits. The complex is composed of a catalytic core of 3 subunits MT-CO1, MT-CO2 and MT-CO3, encoded in the mitochondrial DNA, and 11 supernumerary subunits COX4I, COX5A, COX5B, COX6A, COX6B, COX6C, COX7A, COX7B, COX7C, COX8 and NDUFA4, which are encoded in the nuclear genome. The complex exists as a monomer or a dimer and forms supercomplexes (SCs) in the inner mitochondrial membrane with NADH-ubiquinone oxidoreductase (complex I, CI) and ubiquinol-cytochrome c oxidoreductase (cytochrome b-c1 complex, complex III, CIII), resulting in different assemblies (supercomplex SCI(1)III(2)IV(1) and megacomplex MCI(2)III(2)IV(2)). Found in a complex with TMEM177, COA6, COX18, COX20, SCO1 and SCO2. Interacts with TMEM177 in a COX20-dependent manner. Interacts with COX20. Interacts with COX16. Requires Cu cation as cofactor.

It is found in the mitochondrion inner membrane. It catalyses the reaction 4 Fe(II)-[cytochrome c] + O2 + 8 H(+)(in) = 4 Fe(III)-[cytochrome c] + 2 H2O + 4 H(+)(out). Functionally, component of the cytochrome c oxidase, the last enzyme in the mitochondrial electron transport chain which drives oxidative phosphorylation. The respiratory chain contains 3 multisubunit complexes succinate dehydrogenase (complex II, CII), ubiquinol-cytochrome c oxidoreductase (cytochrome b-c1 complex, complex III, CIII) and cytochrome c oxidase (complex IV, CIV), that cooperate to transfer electrons derived from NADH and succinate to molecular oxygen, creating an electrochemical gradient over the inner membrane that drives transmembrane transport and the ATP synthase. Cytochrome c oxidase is the component of the respiratory chain that catalyzes the reduction of oxygen to water. Electrons originating from reduced cytochrome c in the intermembrane space (IMS) are transferred via the dinuclear copper A center (CU(A)) of subunit 2 and heme A of subunit 1 to the active site in subunit 1, a binuclear center (BNC) formed by heme A3 and copper B (CU(B)). The BNC reduces molecular oxygen to 2 water molecules using 4 electrons from cytochrome c in the IMS and 4 protons from the mitochondrial matrix. The protein is Cytochrome c oxidase subunit 2 (MT-CO2) of Varecia variegata (Black-and-white ruffed lemur).